The chain runs to 155 residues: Large ribosomal subunit protein eL24 (155 aa).

The disordered stretch occupies residues 87 to 155 (LELIKERRSQ…SFQKVKATSR (69 aa)). Positions 89–129 (LIKERRSQKPSDRKAARDSKLAKDKEAKKAAKAARKAEKAK) are enriched in basic and acidic residues. Over residues 130–143 (AVASGASVVSKQQA) the composition is skewed to low complexity.

The protein belongs to the eukaryotic ribosomal protein eL24 family. As to quaternary structure, component of the large ribosomal subunit. Mature ribosomes consist of a small (40S) and a large (60S) subunit. The 40S subunit contains about 32 different proteins and 1 molecule of RNA (18S). The 60S subunit contains 45 different proteins and 3 molecules of RNA (25S, 5.8S and 5S).

Its subcellular location is the cytoplasm. In terms of biological role, component of the ribosome, a large ribonucleoprotein complex responsible for the synthesis of proteins in the cell. The small ribosomal subunit (SSU) binds messenger RNAs (mRNAs) and translates the encoded message by selecting cognate aminoacyl-transfer RNA (tRNA) molecules. The large subunit (LSU) contains the ribosomal catalytic site termed the peptidyl transferase center (PTC), which catalyzes the formation of peptide bonds, thereby polymerizing the amino acids delivered by tRNAs into a polypeptide chain. The nascent polypeptides leave the ribosome through a tunnel in the LSU and interact with protein factors that function in enzymatic processing, targeting, and the membrane insertion of nascent chains at the exit of the ribosomal tunnel. The protein is Large ribosomal subunit protein eL24 of Candida albicans (strain SC5314 / ATCC MYA-2876) (Yeast).